The chain runs to 194 residues: Ribonuclease HII (194 aa).

The RNase H type-2 domain occupies 3–193 (ILTAGVDEAG…VRNLLAQQAL (191 aa)). A divalent metal cation is bound by residues D9, E10, and D101.

This sequence belongs to the RNase HII family. Mn(2+) serves as cofactor. Requires Mg(2+) as cofactor.

The protein resides in the cytoplasm. It catalyses the reaction Endonucleolytic cleavage to 5'-phosphomonoester.. In terms of biological role, endonuclease that specifically degrades the RNA of RNA-DNA hybrids. The chain is Ribonuclease HII (rnhB) from Neisseria meningitidis serogroup B (strain ATCC BAA-335 / MC58).